Consider the following 239-residue polypeptide: uncharacterized protein (239 aa).

An HTH cro/C1-type domain is found at isoleucine 13–leucine 66. A DNA-binding region (H-T-H motif) is located at residues serine 24–glycine 43.

This is an uncharacterized protein from Haemophilus influenzae (strain ATCC 51907 / DSM 11121 / KW20 / Rd).